Consider the following 234-residue polypeptide: Ubiquinone biosynthesis O-methyltransferase (234 aa).

S-adenosyl-L-methionine contacts are provided by Arg40, Gly59, Asp80, and Met123.

Belongs to the methyltransferase superfamily. UbiG/COQ3 family.

The enzyme catalyses a 3-demethylubiquinol + S-adenosyl-L-methionine = a ubiquinol + S-adenosyl-L-homocysteine + H(+). It catalyses the reaction a 3-(all-trans-polyprenyl)benzene-1,2-diol + S-adenosyl-L-methionine = a 2-methoxy-6-(all-trans-polyprenyl)phenol + S-adenosyl-L-homocysteine + H(+). Its pathway is cofactor biosynthesis; ubiquinone biosynthesis. Its function is as follows. O-methyltransferase that catalyzes the 2 O-methylation steps in the ubiquinone biosynthetic pathway. This is Ubiquinone biosynthesis O-methyltransferase from Coxiella burnetii (strain Dugway 5J108-111).